A 494-amino-acid polypeptide reads, in one-letter code: Aspartyl/glutamyl-tRNA(Asn/Gln) amidotransferase subunit B (494 aa).

Belongs to the GatB/GatE family. GatB subfamily. As to quaternary structure, heterotrimer of A, B and C subunits.

It carries out the reaction L-glutamyl-tRNA(Gln) + L-glutamine + ATP + H2O = L-glutaminyl-tRNA(Gln) + L-glutamate + ADP + phosphate + H(+). It catalyses the reaction L-aspartyl-tRNA(Asn) + L-glutamine + ATP + H2O = L-asparaginyl-tRNA(Asn) + L-glutamate + ADP + phosphate + 2 H(+). In terms of biological role, allows the formation of correctly charged Asn-tRNA(Asn) or Gln-tRNA(Gln) through the transamidation of misacylated Asp-tRNA(Asn) or Glu-tRNA(Gln) in organisms which lack either or both of asparaginyl-tRNA or glutaminyl-tRNA synthetases. The reaction takes place in the presence of glutamine and ATP through an activated phospho-Asp-tRNA(Asn) or phospho-Glu-tRNA(Gln). This chain is Aspartyl/glutamyl-tRNA(Asn/Gln) amidotransferase subunit B, found in Synechococcus elongatus (strain ATCC 33912 / PCC 7942 / FACHB-805) (Anacystis nidulans R2).